Reading from the N-terminus, the 1369-residue chain is Rho guanine nucleotide exchange factor 10 (1369 aa).

The tract at residues 1-106 (MRPPGFLSRA…ETTPVAEPTK (106 aa)) is disordered. Residues 46–64 (NNEEEEGEQFDFDSGDEIP) are compositionally biased toward acidic residues. Low complexity predominate over residues 83–100 (EAPAPTGGEDGAGAETTP). Ser180 is subject to Phosphoserine. The segment at 184–254 (EAETPEVTED…ENSDSEPDEM (71 aa)) is disordered. Residues 196-209 (PNSLSSEEPPTSED) show a composition bias toward polar residues. Residues 304–355 (KKQLSHDLTRLKEHYEKKMRDLMASTVGVVEIQQLRQKHELKMQKLVKAAKD) adopt a coiled-coil conformation. Position 379 is a phosphoserine (Ser379). The DH domain maps to 421 to 608 (VRRYILGSVV…ETLAEKLNER (188 aa)). Disordered regions lie at residues 1226–1260 (KDKS…LSQG) and 1277–1297 (QKSD…SSSL). Positions 1279-1296 (SDLSSSSGSLSLSHGSSS) are enriched in low complexity. Ser1287 is subject to Phosphoserine. Position 1338 is an N5-methylglutamine (Gln1338).

In terms of processing, methylated at Gln-1338 by N6AMT1.

May play a role in developmental myelination of peripheral nerves. In Homo sapiens (Human), this protein is Rho guanine nucleotide exchange factor 10 (ARHGEF10).